Consider the following 291-residue polypeptide: Taste receptor type 2 member 16 (291 aa).

Met-1 is a topological domain (extracellular). The helical transmembrane segment at 2–22 threads the bilayer; it reads IPIQLTVFFMIIYVLESLTII. Residues 23-41 are Cytoplasmic-facing; it reads VQSSLIVAVLGREWLQVRR. A helical membrane pass occupies residues 42 to 62; it reads LMPVDMILISLGISRFCLQWA. Topologically, residues 63 to 84 are extracellular; sequence SMLNNFCSYFNLNYVLCNLTIT. Asn-80 carries an N-linked (GlcNAc...) asparagine glycan. The helical transmembrane segment at 85-105 threads the bilayer; it reads WEFFNILTFWLNSLLTVFYCI. At 106–125 the chain is on the cytoplasmic side; the sequence is KVSSFTHHIFLWLRWRILRL. Residues 126–146 traverse the membrane as a helical segment; that stretch reads FPWILLGSLMITCVTIIPSAI. At 147-182 the chain is on the extracellular side; it reads GNYIQIQLLTMEHLPRNSTVTDKLENFHQYQFQAHT. Asn-163 carries an N-linked (GlcNAc...) asparagine glycan. A helical membrane pass occupies residues 183 to 203; the sequence is VALVIPFILFLASTIFLMASL. Over 204-228 the chain is Cytoplasmic; the sequence is TKQIQHHSTGHCNPSMKARFTALRS. The helical transmembrane segment at 229-249 threads the bilayer; the sequence is LAVLFIVFTSYFLTILITIIG. At 250 to 257 the chain is on the extracellular side; that stretch reads TLFDKRCW. The chain crosses the membrane as a helical span at residues 258 to 278; sequence LWVWEAFVYAFILMHSTSLML. The Cytoplasmic segment spans residues 279–291; it reads SSPTLKRILKGKC.

This sequence belongs to the G-protein coupled receptor T2R family. Interacts with RTP3 and RTP4. Expressed in a subset of gustducin-positive taste receptor cells of the tongue. Expressed in circumvallate papillae and testis.

It localises to the cell membrane. Its function is as follows. Gustducin-coupled receptor implicated in the perception of bitter compounds in the oral cavity and the gastrointestinal tract. Signals through PLCB2 and the calcium-regulated cation channel TRPM5. The polypeptide is Taste receptor type 2 member 16 (TAS2R16) (Homo sapiens (Human)).